The following is a 90-amino-acid chain: Probable Fe(2+)-trafficking protein (90 aa).

The protein belongs to the Fe(2+)-trafficking protein family.

Its function is as follows. Could be a mediator in iron transactions between iron acquisition and iron-requiring processes, such as synthesis and/or repair of Fe-S clusters in biosynthetic enzymes. This is Probable Fe(2+)-trafficking protein from Polaromonas sp. (strain JS666 / ATCC BAA-500).